Reading from the N-terminus, the 131-residue chain is M-zodatoxin-Lt8o (131 aa).

The N-terminal stretch at 1-20 is a signal peptide; it reads MKYFVVALALVAAFACIAES. Positions 21-60 are excised as a propeptide; sequence KPAESEHELAEVEEENELADLEDAVWLEHLADLSDLEEAR.

Belongs to the cationic peptide 06 (cytoinsectotoxin) family. Expressed by the venom gland.

The protein resides in the secreted. Its function is as follows. Insecticidal, cytolytic and antimicrobial peptide. Forms voltage-dependent, ion-permeable channels in membranes. At high concentration causes cell membrane lysis. The sequence is that of M-zodatoxin-Lt8o (cit 1-14) from Lachesana tarabaevi (Spider).